A 181-amino-acid polypeptide reads, in one-letter code: Translation initiation factor IF-3, chloroplastic (181 aa).

It belongs to the IF-3 family. Monomer.

It localises to the plastid. It is found in the chloroplast. In terms of biological role, IF-3 binds to the 30S ribosomal subunit and shifts the equilibrium between 70S ribosomes and their 50S and 30S subunits in favor of the free subunits, thus enhancing the availability of 30S subunits on which protein synthesis initiation begins. This is Translation initiation factor IF-3, chloroplastic from Gracilaria tenuistipitata var. liui (Red alga).